A 23-amino-acid chain; its full sequence is Coenzyme PQQ synthesis protein A (23 aa).

Positions 15–19 form a cross-link, pyrroloquinoline quinone (Glu-Tyr); sequence EVTMY.

This sequence belongs to the PqqA family.

The protein operates within cofactor biosynthesis; pyrroloquinoline quinone biosynthesis. In terms of biological role, required for coenzyme pyrroloquinoline quinone (PQQ) biosynthesis. PQQ is probably formed by cross-linking a specific glutamate to a specific tyrosine residue and excising these residues from the peptide. The sequence is that of Coenzyme PQQ synthesis protein A from Pseudomonas putida (strain W619).